A 513-amino-acid chain; its full sequence is Glucose-6-phosphate 1-dehydrogenase 2 (513 aa).

N-acetylalanine is present on Ala2. The residue at position 8 (Ser8) is a Phosphoserine. Thr10 is modified (phosphothreonine). NADP(+)-binding positions include 38 to 45 (GASGDLAK) and Arg72. Position 89 is an N6-acetyllysine (Lys89). Positions 147 and 171 each coordinate NADP(+). Residues Lys171, 201-205 (HYLDK), Glu239, and Asp258 each bind D-glucose 6-phosphate. Position 171 is an N6-(2-hydroxyisobutyryl)lysine; alternate (Lys171). At Lys171 the chain carries N6-acetyllysine; alternate. Catalysis depends on His263, which acts as the Proton acceptor. Arg357 is an NADP(+) binding site. Positions 360 and 365 each coordinate D-glucose 6-phosphate. 3 residues coordinate NADP(+): Lys366, Arg370, and Arg393. Residue Gln395 coordinates D-glucose 6-phosphate. 421–423 (DLT) serves as a coordination point for NADP(+). Lys432 is subject to N6-acetyllysine. Arg487 and Tyr503 together coordinate NADP(+). Residue Tyr503 is modified to Phosphotyrosine.

This sequence belongs to the glucose-6-phosphate dehydrogenase family. Homotetramer; dimer of dimers. Interacts with SIRT2; the interaction is enhanced by H(2)O(2) treatment. Post-translationally, acetylated by ELP3; acetylation inhibits its homodimerization and enzyme activity. Deacetylated by SIRT2; deacetylation stimulates its enzyme activity. Testis.

The protein resides in the cytoplasm. Its subcellular location is the cytosol. The protein localises to the membrane. It carries out the reaction D-glucose 6-phosphate + NADP(+) = 6-phospho-D-glucono-1,5-lactone + NADPH + H(+). The protein operates within carbohydrate degradation; pentose phosphate pathway; D-ribulose 5-phosphate from D-glucose 6-phosphate (oxidative stage): step 1/3. Catalyzes the rate-limiting step of the oxidative pentose-phosphate pathway, which represents a route for the dissimilation of carbohydrates besides glycolysis. The main function of this enzyme is to provide reducing power (NADPH) and pentose phosphates for fatty acid and nucleic acid synthesis. The polypeptide is Glucose-6-phosphate 1-dehydrogenase 2 (G6pd2) (Mus musculus (Mouse)).